Consider the following 257-residue polypeptide: Pyridoxine 5'-phosphate synthase (257 aa).

N6 lines the 3-amino-2-oxopropyl phosphate pocket. Residue 8-9 coordinates 1-deoxy-D-xylulose 5-phosphate; it reads DH. R17 contacts 3-amino-2-oxopropyl phosphate. The active-site Proton acceptor is H41. R43 and H48 together coordinate 1-deoxy-D-xylulose 5-phosphate. Residue E68 is the Proton acceptor of the active site. T98 provides a ligand contact to 1-deoxy-D-xylulose 5-phosphate. H210 serves as the catalytic Proton donor. 3-amino-2-oxopropyl phosphate is bound by residues G211 and 232-233; that span reads GQ.

The protein belongs to the PNP synthase family. As to quaternary structure, homooctamer; tetramer of dimers.

It localises to the cytoplasm. It carries out the reaction 3-amino-2-oxopropyl phosphate + 1-deoxy-D-xylulose 5-phosphate = pyridoxine 5'-phosphate + phosphate + 2 H2O + H(+). The protein operates within cofactor biosynthesis; pyridoxine 5'-phosphate biosynthesis; pyridoxine 5'-phosphate from D-erythrose 4-phosphate: step 5/5. Its function is as follows. Catalyzes the complicated ring closure reaction between the two acyclic compounds 1-deoxy-D-xylulose-5-phosphate (DXP) and 3-amino-2-oxopropyl phosphate (1-amino-acetone-3-phosphate or AAP) to form pyridoxine 5'-phosphate (PNP) and inorganic phosphate. This chain is Pyridoxine 5'-phosphate synthase, found in Campylobacter jejuni subsp. doylei (strain ATCC BAA-1458 / RM4099 / 269.97).